The following is a 419-amino-acid chain: Coiled-coil domain-containing protein 85C (419 aa).

Alanine 2 carries the post-translational modification N-acetylalanine. Coiled coils occupy residues 22 to 88 (ELLR…RELC) and 118 to 159 (HEVA…AALA). Disordered regions lie at residues 162–268 (GAAS…DPSS) and 307–348 (HSES…AGQK). Residues 164 to 175 (ASGGGGGGGGAG) show a composition bias toward gly residues. A compositionally biased stretch (low complexity) spans 176–189 (SRSSIDSQASLSGP). The residue at position 178 (serine 178) is a Phosphoserine. Positions 224–233 (PPPLLPPGPH) are enriched in pro residues. Residue serine 246 is modified to Phosphoserine. Polar residues predominate over residues 307 to 325 (HSESQLASLPPSYQDSLQN). A compositionally biased stretch (pro residues) spans 329-338 (CPAPELPSPP).

The protein belongs to the CCDC85 family. In terms of assembly, may interact with ARVCF, CTNND1, CTNND2 and PKP4.

The protein localises to the cell junction. The protein resides in the tight junction. It is found in the adherens junction. Functionally, may play a role in cell-cell adhesion and epithelium development through its interaction with proteins of the beta-catenin family. May play an important role in cortical development, especially in the maintenance of radial glia. This chain is Coiled-coil domain-containing protein 85C (CCDC85C), found in Homo sapiens (Human).